A 253-amino-acid polypeptide reads, in one-letter code: BRI3-binding protein (253 aa).

4 helical membrane-spanning segments follow: residues 19–39 (VLLP…PGAQ), 131–151 (ALVL…TLGF), 164–181 (FWLV…YILH), and 190–210 (AVLP…MGYW). Positions 219-253 (SPSVEEKLEHLENQVRLLNIRLNRVLENLDRSKDK) form a coiled coil. Phosphoserine is present on Ser-250.

In terms of assembly, interacts with LETMD1. Interacts with BRI3. Interacts with BRI3; the interaction is weak. Interacts with TMEM238L.

The protein resides in the mitochondrion outer membrane. In terms of biological role, involved in tumorigenesis and may function by stabilizing p53/TP53. The chain is BRI3-binding protein from Mus musculus (Mouse).